The sequence spans 87 residues: UPF0250 protein YbeD (87 aa).

Belongs to the UPF0250 family.

This chain is UPF0250 protein YbeD, found in Shigella boydii serotype 18 (strain CDC 3083-94 / BS512).